The following is a 661-amino-acid chain: uncharacterized protein (661 aa).

The N-terminal stretch at 1-24 (MKTLKTLKIFIIVFIASVSLASFA) is a signal peptide. The next 6 membrane-spanning stretches (helical) occupy residues 226 to 246 (IIGA…ALNT), 254 to 274 (IALF…LGPL), 410 to 430 (IILA…LYFI), 436 to 456 (CMIT…MALF), 469 to 489 (VCIS…LLIT), and 562 to 582 (VVSI…FYYF). Residues 629 to 661 (GKPLVGDKPGVGGKRKEGEQQGGDLASGSGGGK) form a disordered region.

This sequence belongs to the TrbL/VirB6 family.

The protein resides in the cell membrane. This is an uncharacterized protein from Rickettsia conorii (strain ATCC VR-613 / Malish 7).